Consider the following 1196-residue polypeptide: DNA-directed RNA polymerase subunit beta (1196 aa).

The protein belongs to the RNA polymerase beta chain family. As to quaternary structure, the RNAP catalytic core consists of 2 alpha, 1 beta, 1 beta' and 1 omega subunit. When a sigma factor is associated with the core the holoenzyme is formed, which can initiate transcription.

It catalyses the reaction RNA(n) + a ribonucleoside 5'-triphosphate = RNA(n+1) + diphosphate. DNA-dependent RNA polymerase catalyzes the transcription of DNA into RNA using the four ribonucleoside triphosphates as substrates. This chain is DNA-directed RNA polymerase subunit beta, found in Lactococcus lactis subsp. cremoris (strain SK11).